A 227-amino-acid polypeptide reads, in one-letter code: Ubiquitin domain-containing protein 1 (227 aa).

Positions 1–36 (MGNCVGRQRRERPTAPGHPRKRAGRNEPLKKERLKW) are disordered. The span at 24–36 (GRNEPLKKERLKW) shows a compositional bias: basic and acidic residues. The region spanning 149 to 224 (FPLKVRLSTG…IQVIINQPPP (76 aa)) is the Ubiquitin-like domain.

In terms of assembly, interacts with UBTD1.

Its function is as follows. May be involved in the regulation of cellular senescence through a positive feedback loop with TP53. Is a TP53 downstream target gene that increases the stability of TP53 protein by promoting the ubiquitination and degradation of MDM2. The sequence is that of Ubiquitin domain-containing protein 1 (UBTD1) from Bos taurus (Bovine).